The primary structure comprises 354 residues: S-adenosylmethionine:tRNA ribosyltransferase-isomerase (354 aa).

Belongs to the QueA family. In terms of assembly, monomer.

The protein resides in the cytoplasm. It catalyses the reaction 7-aminomethyl-7-carbaguanosine(34) in tRNA + S-adenosyl-L-methionine = epoxyqueuosine(34) in tRNA + adenine + L-methionine + 2 H(+). It participates in tRNA modification; tRNA-queuosine biosynthesis. Its function is as follows. Transfers and isomerizes the ribose moiety from AdoMet to the 7-aminomethyl group of 7-deazaguanine (preQ1-tRNA) to give epoxyqueuosine (oQ-tRNA). This chain is S-adenosylmethionine:tRNA ribosyltransferase-isomerase, found in Azorhizobium caulinodans (strain ATCC 43989 / DSM 5975 / JCM 20966 / LMG 6465 / NBRC 14845 / NCIMB 13405 / ORS 571).